We begin with the raw amino-acid sequence, 388 residues long: Succinate--CoA ligase [ADP-forming] subunit beta (388 aa).

Residues 9–244 (KQIFAKYKLP…PSQDDPREAL (236 aa)) enclose the ATP-grasp domain. ATP-binding positions include lysine 46, 53–55 (GRG), glutamate 99, alanine 102, and glutamate 107. Positions 199 and 213 each coordinate Mg(2+). Substrate contacts are provided by residues asparagine 264 and 321 to 323 (GIV).

This sequence belongs to the succinate/malate CoA ligase beta subunit family. In terms of assembly, heterotetramer of two alpha and two beta subunits. Mg(2+) serves as cofactor.

The enzyme catalyses succinate + ATP + CoA = succinyl-CoA + ADP + phosphate. The catalysed reaction is GTP + succinate + CoA = succinyl-CoA + GDP + phosphate. The protein operates within carbohydrate metabolism; tricarboxylic acid cycle; succinate from succinyl-CoA (ligase route): step 1/1. Its function is as follows. Succinyl-CoA synthetase functions in the citric acid cycle (TCA), coupling the hydrolysis of succinyl-CoA to the synthesis of either ATP or GTP and thus represents the only step of substrate-level phosphorylation in the TCA. The beta subunit provides nucleotide specificity of the enzyme and binds the substrate succinate, while the binding sites for coenzyme A and phosphate are found in the alpha subunit. This is Succinate--CoA ligase [ADP-forming] subunit beta from Glaesserella parasuis serovar 5 (strain SH0165) (Haemophilus parasuis).